A 179-amino-acid chain; its full sequence is Large ribosomal subunit protein uL6 (179 aa).

This sequence belongs to the universal ribosomal protein uL6 family. As to quaternary structure, part of the 50S ribosomal subunit.

Its function is as follows. This protein binds to the 23S rRNA, and is important in its secondary structure. It is located near the subunit interface in the base of the L7/L12 stalk, and near the tRNA binding site of the peptidyltransferase center. This is Large ribosomal subunit protein uL6 from Nocardioides sp. (strain ATCC BAA-499 / JS614).